The primary structure comprises 342 residues: Ribosomal RNA small subunit methyltransferase C (342 aa).

This sequence belongs to the methyltransferase superfamily. RsmC family. In terms of assembly, monomer.

The protein resides in the cytoplasm. It catalyses the reaction guanosine(1207) in 16S rRNA + S-adenosyl-L-methionine = N(2)-methylguanosine(1207) in 16S rRNA + S-adenosyl-L-homocysteine + H(+). Functionally, specifically methylates the guanine in position 1207 of 16S rRNA in the 30S particle. This is Ribosomal RNA small subunit methyltransferase C from Hahella chejuensis (strain KCTC 2396).